A 371-amino-acid polypeptide reads, in one-letter code: Ligninase LG5 (371 aa).

The first 21 residues, 1–21, serve as a signal peptide directing secretion; sequence MAFKKLLAVLTAALSLRAAQG. Residues 22–27 constitute a propeptide that is removed on maturation; sequence AAVEKR. 4 cysteine pairs are disulfide-bonded: Cys-30–Cys-42, Cys-41–Cys-311, Cys-61–Cys-146, and Cys-275–Cys-344. His-74 serves as the catalytic Proton acceptor. Asp-75, Gly-92, Asp-94, and Ser-96 together coordinate Ca(2+). Position 202 (His-202) interacts with heme b. Ca(2+) contacts are provided by Ser-203, Asp-220, Thr-222, Ile-225, and Asp-227. Asn-283 is a glycosylation site (N-linked (GlcNAc...) asparagine). Positions 349-371 are disordered; that stretch reads FPTLSTLPGPATSVARIPPPPGA.

The protein belongs to the peroxidase family. Ligninase subfamily. Requires Ca(2+) as cofactor. Heme b is required as a cofactor.

It carries out the reaction 1-(3,4-dimethoxyphenyl)-2-(2-methoxyphenoxy)propane-1,3-diol + H2O2 = 3,4-dimethoxybenzaldehyde + guaiacol + glycolaldehyde + H2O. It catalyses the reaction 2 (3,4-dimethoxyphenyl)methanol + H2O2 = 2 (3,4-dimethoxyphenyl)methanol radical + 2 H2O. Its pathway is secondary metabolite metabolism; lignin degradation. In terms of biological role, depolymerization of lignin. Catalyzes the C(alpha)-C(beta) cleavage of the propyl side chains of lignin. The protein is Ligninase LG5 (GLG5) of Phanerodontia chrysosporium (White-rot fungus).